The chain runs to 247 residues: MSSHILFEHPLNEKMRTWLRIEFLIQQMSFHLPIAEHATALHFFRNVGDLLDVIERGDVRTELLKELERQQRKLQGWAEVPGVDQNRIDSIRLQLKQSSTILMAAPRVGQFLREDRLIGLVRQRLSIPGGCCSFDLPTLHIWLHMSQEQRDAQVKNWMGSLEPMNQALTLILDLVRNSAPFRKQTSLNGFYHDNGDDADLLRLQLSLGDQLYPQISGHKSRFAIRFMPLDSENGSVPERLDFELACC.

This sequence belongs to the ZapD family. Interacts with FtsZ.

It is found in the cytoplasm. Cell division factor that enhances FtsZ-ring assembly. Directly interacts with FtsZ and promotes bundling of FtsZ protofilaments, with a reduction in FtsZ GTPase activity. This chain is Cell division protein ZapD, found in Enterobacter sp. (strain 638).